We begin with the raw amino-acid sequence, 332 residues long: Phosphate acyltransferase (332 aa).

This sequence belongs to the PlsX family. Homodimer. Probably interacts with PlsY.

The protein localises to the cytoplasm. The catalysed reaction is a fatty acyl-[ACP] + phosphate = an acyl phosphate + holo-[ACP]. Its pathway is lipid metabolism; phospholipid metabolism. Catalyzes the reversible formation of acyl-phosphate (acyl-PO(4)) from acyl-[acyl-carrier-protein] (acyl-ACP). This enzyme utilizes acyl-ACP as fatty acyl donor, but not acyl-CoA. This Sulfurimonas denitrificans (strain ATCC 33889 / DSM 1251) (Thiomicrospira denitrificans (strain ATCC 33889 / DSM 1251)) protein is Phosphate acyltransferase.